Consider the following 551-residue polypeptide: Putative ABC transporter ATP-binding protein BA_3364/GBAA_3364/BAS3118 (551 aa).

2 ABC transporter domains span residues 5-243 and 293-525; these read AEIK…FRPF and LSAE…SINR. ATP contacts are provided by residues 39 to 46 and 327 to 334; these read GGSGSGKT and GKNGTGKS.

It belongs to the ABC transporter superfamily.

The protein localises to the cell membrane. Probably part of an ABC transporter complex. Responsible for energy coupling to the transport system. The sequence is that of Putative ABC transporter ATP-binding protein BA_3364/GBAA_3364/BAS3118 from Bacillus anthracis.